A 962-amino-acid polypeptide reads, in one-letter code: Spliceosome associated factor 3, U4/U6 recycling protein (962 aa).

Positions Met-1–Glu-21 are enriched in low complexity. The interval Met-1–Glu-92 is disordered. Residue Ala-2 is modified to N-acetylalanine. Residues Ala-2–Ser-352 are mediates interaction with PRPF3. A Phosphoserine modification is found at Ser-10. A compositionally biased stretch (acidic residues) spans Ala-81–Glu-92. 9 HAT repeats span residues Gly-127–Ser-159, Leu-165–Gly-196, Gly-202–Ala-238, Ala-243–Glu-276, Gly-325–Arg-357, Lys-360–Arg-392, Leu-395–Arg-431, Lys-441–Leu-474, and Asn-488–Ala-521. Ser-216 bears the Phosphoserine mark. Positions Asn-488–Ala-521 are required for interaction with USP4. The interval Cys-538–Asn-952 is necessary and sufficient for U6 snRNA binding. A coiled-coil region spans residues Thr-559–Thr-618. Positions Leu-591–Arg-602 are enriched in basic and acidic residues. The disordered stretch occupies residues Leu-591–Ala-696. Positions Gln-601–Cys-670 are required for nuclear localization. The short motif at Arg-602–Lys-609 is the Nuclear localization signal element. Residues Lys-603–Thr-618 show a composition bias toward basic residues. Residues Asp-627 to Glu-640 are compositionally biased toward acidic residues. Residue Ser-651 is modified to Phosphoserine. The span at Lys-680–Ala-696 shows a compositional bias: basic and acidic residues. The region spanning Val-704 to Asp-782 is the RRM 1 domain. Residues Ser-795 and Ser-852 each carry the phosphoserine modification. Residues His-801–Pro-878 form the RRM 2 domain. The tract at residues Gln-880–Lys-962 is disordered. Arg-906 carries the omega-N-methylarginine modification.

Component of the 7SK snRNP complex at least composed of P-TEFb (composed of CDK9 and CCNT1/cyclin-T1), HEXIM1, HEXIM2, BCDIN3, SART3 proteins and 7SK and U6 snRNAs. Interacts with AGO1 and AGO2. Interacts with PRPF3 and USP4; the interaction with PRPF3 is direct and recruits USP4 to its substrate PRPF3. Interacts with USP15; the interaction is direct. Ubiquitously expressed, with low level of expression in liver, heart and skeletal. Also detected in hematopoietic cells (at protein level).

The protein localises to the nucleus. It is found in the nucleoplasm. Its subcellular location is the cajal body. It localises to the nucleus speckle. The protein resides in the cytoplasm. Its function is as follows. U6 snRNP-binding protein that functions as a recycling factor of the splicing machinery. Promotes the initial reassembly of U4 and U6 snRNPs following their ejection from the spliceosome during its maturation. Also binds U6atac snRNPs and may function as a recycling factor for U4atac/U6atac spliceosomal snRNP, an initial step in the assembly of U12-type spliceosomal complex. The U12-type spliceosomal complex plays a role in the splicing of introns with non-canonical splice sites. May also function as a substrate-targeting factor for deubiquitinases like USP4 and USP15. Recruits USP4 to ubiquitinated PRPF3 within the U4/U5/U6 tri-snRNP complex, promoting PRPF3 deubiquitination and thereby regulating the spliceosome U4/U5/U6 tri-snRNP spliceosomal complex disassembly. May also recruit the deubiquitinase USP15 to histone H2B and mediate histone deubiquitination, thereby regulating gene expression and/or DNA repair. May play a role in hematopoiesis probably through transcription regulation of specific genes including MYC. The protein is Spliceosome associated factor 3, U4/U6 recycling protein of Mus musculus (Mouse).